The sequence spans 344 residues: Holliday junction branch migration complex subunit RuvB (344 aa).

The tract at residues 1-182 (MRIELLNTPP…FGINSRFDYY (182 aa)) is large ATPase domain (RuvB-L). Residues isoleucine 21, arginine 22, glycine 63, lysine 66, threonine 67, threonine 68, 129–131 (EDF), arginine 172, tyrosine 182, and arginine 219 contribute to the ATP site. Threonine 67 is a Mg(2+) binding site. Residues 183-253 (APELLEGIIR…IAMKTLDCLE (71 aa)) are small ATPAse domain (RuvB-S). Positions 256–344 (EEGLDDMDKK…ISLFDAQPTS (89 aa)) are head domain (RuvB-H). Arginine 311 and arginine 316 together coordinate DNA.

The protein belongs to the RuvB family. Homohexamer. Forms an RuvA(8)-RuvB(12)-Holliday junction (HJ) complex. HJ DNA is sandwiched between 2 RuvA tetramers; dsDNA enters through RuvA and exits via RuvB. An RuvB hexamer assembles on each DNA strand where it exits the tetramer. Each RuvB hexamer is contacted by two RuvA subunits (via domain III) on 2 adjacent RuvB subunits; this complex drives branch migration. In the full resolvosome a probable DNA-RuvA(4)-RuvB(12)-RuvC(2) complex forms which resolves the HJ.

It localises to the cytoplasm. The catalysed reaction is ATP + H2O = ADP + phosphate + H(+). The RuvA-RuvB-RuvC complex processes Holliday junction (HJ) DNA during genetic recombination and DNA repair, while the RuvA-RuvB complex plays an important role in the rescue of blocked DNA replication forks via replication fork reversal (RFR). RuvA specifically binds to HJ cruciform DNA, conferring on it an open structure. The RuvB hexamer acts as an ATP-dependent pump, pulling dsDNA into and through the RuvAB complex. RuvB forms 2 homohexamers on either side of HJ DNA bound by 1 or 2 RuvA tetramers; 4 subunits per hexamer contact DNA at a time. Coordinated motions by a converter formed by DNA-disengaged RuvB subunits stimulates ATP hydrolysis and nucleotide exchange. Immobilization of the converter enables RuvB to convert the ATP-contained energy into a lever motion, pulling 2 nucleotides of DNA out of the RuvA tetramer per ATP hydrolyzed, thus driving DNA branch migration. The RuvB motors rotate together with the DNA substrate, which together with the progressing nucleotide cycle form the mechanistic basis for DNA recombination by continuous HJ branch migration. Branch migration allows RuvC to scan DNA until it finds its consensus sequence, where it cleaves and resolves cruciform DNA. The chain is Holliday junction branch migration complex subunit RuvB from Pelodictyon phaeoclathratiforme (strain DSM 5477 / BU-1).